Reading from the N-terminus, the 174-residue chain is RNA pyrophosphohydrolase (174 aa).

Positions 6-149 constitute a Nudix hydrolase domain; sequence GYRPNVGIIL…KRDVYLGALK (144 aa). The short motif at 38–59 is the Nudix box element; it reads GGIKPGESPETAMYRELYEEVG.

The protein belongs to the Nudix hydrolase family. RppH subfamily. The cofactor is a divalent metal cation.

Accelerates the degradation of transcripts by removing pyrophosphate from the 5'-end of triphosphorylated RNA, leading to a more labile monophosphorylated state that can stimulate subsequent ribonuclease cleavage. The polypeptide is RNA pyrophosphohydrolase (Neisseria meningitidis serogroup B (strain ATCC BAA-335 / MC58)).